The following is a 127-amino-acid chain: Small ribosomal subunit protein uS13 (127 aa).

A disordered region spans residues His92–Lys127. The span at Gln101–Lys127 shows a compositional bias: basic residues.

It belongs to the universal ribosomal protein uS13 family. In terms of assembly, part of the 30S ribosomal subunit. Forms a loose heterodimer with protein S19. Forms two bridges to the 50S subunit in the 70S ribosome.

In terms of biological role, located at the top of the head of the 30S subunit, it contacts several helices of the 16S rRNA. In the 70S ribosome it contacts the 23S rRNA (bridge B1a) and protein L5 of the 50S subunit (bridge B1b), connecting the 2 subunits; these bridges are implicated in subunit movement. Contacts the tRNAs in the A and P-sites. The polypeptide is Small ribosomal subunit protein uS13 (Gloeothece citriformis (strain PCC 7424) (Cyanothece sp. (strain PCC 7424))).